The primary structure comprises 43 residues: Potassium channel toxin gamma-KTx 3.3 (43 aa).

Intrachain disulfides connect Cys5–Cys23, Cys11–Cys34, Cys20–Cys39, and Cys24–Cys41.

The protein belongs to the ergtoxin family. Gamma-KTx 3 subfamily. Expressed by the venom gland.

It localises to the secreted. Functionally, blocks Kv11/ERG potassium channels. This is Potassium channel toxin gamma-KTx 3.3 from Centruroides sculpturatus (Arizona bark scorpion).